Reading from the N-terminus, the 163-residue chain is Troponin C (163 aa).

S1 carries the N-acetylserine modification. EF-hand domains lie at 14–49 (EQIS…LGMS), 50–85 (ISRE…AMQD), 90–125 (IPDD…CAGD), and 127–162 (LTDD…LKVR). K20 carries the post-translational modification N6,N6-dimethyllysine; alternate. An N6-methyllysine; alternate modification is found at K20. Ca(2+)-binding residues include D27, D29, D33, E38, D63, D65, S67, T69, E74, D103, N105, D107, and E114.

This sequence belongs to the troponin C family.

Its function is as follows. Troponin is the central regulatory protein of striated muscle contraction. Tn consists of three components: Tn-I which is the inhibitor of actomyosin ATPase, Tn-T which contains the binding site for tropomyosin and Tn-C. The binding of calcium to Tn-C abolishes the inhibitory action of Tn on actin filaments. This is Troponin C from Branchiostoma lanceolatum (Common lancelet).